A 371-amino-acid polypeptide reads, in one-letter code: MSAFKPTIKRRESTKIYVGNVPVGGDAPIAVQSMTNTRTTDVEATVTQIKALERVGADIIRVSVPTMEAAEAFKLIKQQTKVPLVADIHFDYRIALKVAEYGVDCLRINPGNIGREDRIRAVVDCAKDKNIPIRIGVNAGSLERDLQEKYGEPTPEALLESALRHVEILDRLNFDQFKVSVKASDVFLAVESYRLLAKAIKQPLHLGITEAGGARAGAVKSAVGLGMLLAEGIGDTLRVSLAADPVEEIKVGFDILKSLRIRSRGINFIACPTCSRQEFDVIGTVNELEQRLEDIITPMDVSIIGCVVNGPGEALVSDLGVTGGNKKSGYYLNGERQKERFDNDDIVNQLEARIRSKVAMQENRIEVSPVE.

[4Fe-4S] cluster is bound by residues C271, C274, C306, and E313.

It belongs to the IspG family. The cofactor is [4Fe-4S] cluster.

It carries out the reaction (2E)-4-hydroxy-3-methylbut-2-enyl diphosphate + oxidized [flavodoxin] + H2O + 2 H(+) = 2-C-methyl-D-erythritol 2,4-cyclic diphosphate + reduced [flavodoxin]. It functions in the pathway isoprenoid biosynthesis; isopentenyl diphosphate biosynthesis via DXP pathway; isopentenyl diphosphate from 1-deoxy-D-xylulose 5-phosphate: step 5/6. Its function is as follows. Converts 2C-methyl-D-erythritol 2,4-cyclodiphosphate (ME-2,4cPP) into 1-hydroxy-2-methyl-2-(E)-butenyl 4-diphosphate. The polypeptide is 4-hydroxy-3-methylbut-2-en-1-yl diphosphate synthase (flavodoxin) (Actinobacillus succinogenes (strain ATCC 55618 / DSM 22257 / CCUG 43843 / 130Z)).